We begin with the raw amino-acid sequence, 120 residues long: UPF0382 membrane protein SSP2132 (120 aa).

4 consecutive transmembrane segments (helical) span residues 3–23 (VFIILGALNAMMAVGTGAFGA), 46–66 (MYHGLGLLAIGIISGTTSINV), 69–89 (VGWLLFFGIVFFSGSLYILAL), and 94–114 (IIGAITPIGGVLFIVGWLMLV).

The protein belongs to the UPF0382 family.

The protein localises to the cell membrane. This chain is UPF0382 membrane protein SSP2132, found in Staphylococcus saprophyticus subsp. saprophyticus (strain ATCC 15305 / DSM 20229 / NCIMB 8711 / NCTC 7292 / S-41).